The chain runs to 191 residues: Hypoxanthine/guanine phosphoribosyltransferase (191 aa).

The protein belongs to the purine/pyrimidine phosphoribosyltransferase family. Archaeal HPRT subfamily. Homodimer.

The protein localises to the cytoplasm. It catalyses the reaction IMP + diphosphate = hypoxanthine + 5-phospho-alpha-D-ribose 1-diphosphate. The catalysed reaction is GMP + diphosphate = guanine + 5-phospho-alpha-D-ribose 1-diphosphate. It functions in the pathway purine metabolism; IMP biosynthesis via salvage pathway; IMP from hypoxanthine: step 1/1. Functionally, catalyzes a salvage reaction resulting in the formation of IMP that is energically less costly than de novo synthesis. The polypeptide is Hypoxanthine/guanine phosphoribosyltransferase (Methanocella paludicola (strain DSM 17711 / JCM 13418 / NBRC 101707 / SANAE)).